A 202-amino-acid polypeptide reads, in one-letter code: Small ribosomal subunit protein uS4 (202 aa).

The 78-residue stretch at 91 to 168 (SMLSSVLYNS…QKVPDYLEVD (78 aa)) folds into the S4 RNA-binding domain.

Belongs to the universal ribosomal protein uS4 family. In terms of assembly, part of the 30S ribosomal subunit. Contacts protein S5. The interaction surface between S4 and S5 is involved in control of translational fidelity.

Functionally, one of the primary rRNA binding proteins, it binds directly to 16S rRNA where it nucleates assembly of the body of the 30S subunit. With S5 and S12 plays an important role in translational accuracy. The polypeptide is Small ribosomal subunit protein uS4 (Ehrlichia ruminantium (strain Welgevonden)).